The sequence spans 843 residues: Protein P (843 aa).

A terminal protein domain (TP) region spans residues 1–177 (MPLSYQHFRR…FCGSPYSWEQ (177 aa)). Residues 178–346 (ELQHGSTSLN…YCLSHIINLL (169 aa)) are spacer. The interval 249–301 (TPTRWPSGVEPSGTGHSDNLATRSTSRFHQSEVRKETNPSLSTSKGHTSTGHA) is disordered. 2 stretches are compositionally biased toward polar residues: residues 262–276 (TGHS…TSRF) and 286–299 (NPSL…TSTG). The interval 347–690 (EDWGPCYEHG…YMNLYPVARQ (344 aa)) is polymerase/reverse transcriptase domain (RT). The 244-residue stretch at 357-600 (EHHIRTPRTP…YSLHFMGYII (244 aa)) folds into the Reverse transcriptase domain. Asp-429, Asp-551, and Asp-552 together coordinate Mg(2+).

This sequence belongs to the hepadnaviridae P protein family.

It carries out the reaction DNA(n) + a 2'-deoxyribonucleoside 5'-triphosphate = DNA(n+1) + diphosphate. The catalysed reaction is Endonucleolytic cleavage to 5'-phosphomonoester.. Its activity is regulated as follows. Activated by host HSP70 and HSP40 in vitro to be able to bind the epsilon loop of the pgRNA. Because deletion of the RNase H region renders the protein partly chaperone-independent, the chaperones may be needed indirectly to relieve occlusion of the RNA-binding site by this domain. Inhibited by several reverse-transcriptase inhibitors: Lamivudine, Adefovir and Entecavir. Its function is as follows. Multifunctional enzyme that converts the viral RNA genome into dsDNA in viral cytoplasmic capsids. This enzyme displays a DNA polymerase activity that can copy either DNA or RNA templates, and a ribonuclease H (RNase H) activity that cleaves the RNA strand of RNA-DNA heteroduplexes in a partially processive 3'- to 5'-endonucleasic mode. Neo-synthesized pregenomic RNA (pgRNA) are encapsidated together with the P protein, and reverse-transcribed inside the nucleocapsid. Initiation of reverse-transcription occurs first by binding the epsilon loop on the pgRNA genome, and is initiated by protein priming, thereby the 5'-end of (-)DNA is covalently linked to P protein. Partial (+)DNA is synthesized from the (-)DNA template and generates the relaxed circular DNA (RC-DNA) genome. After budding and infection, the RC-DNA migrates in the nucleus, and is converted into a plasmid-like covalently closed circular DNA (cccDNA). The activity of P protein does not seem to be necessary for cccDNA generation, and is presumably released from (+)DNA by host nuclear DNA repair machinery. The polypeptide is Protein P (Homo sapiens (Human)).